A 258-amino-acid polypeptide reads, in one-letter code: Imidazole glycerol phosphate synthase subunit HisF (258 aa).

Residues Asp-11 and Asp-130 contribute to the active site.

The protein belongs to the HisA/HisF family. Heterodimer of HisH and HisF.

Its subcellular location is the cytoplasm. It carries out the reaction 5-[(5-phospho-1-deoxy-D-ribulos-1-ylimino)methylamino]-1-(5-phospho-beta-D-ribosyl)imidazole-4-carboxamide + L-glutamine = D-erythro-1-(imidazol-4-yl)glycerol 3-phosphate + 5-amino-1-(5-phospho-beta-D-ribosyl)imidazole-4-carboxamide + L-glutamate + H(+). It participates in amino-acid biosynthesis; L-histidine biosynthesis; L-histidine from 5-phospho-alpha-D-ribose 1-diphosphate: step 5/9. In terms of biological role, IGPS catalyzes the conversion of PRFAR and glutamine to IGP, AICAR and glutamate. The HisF subunit catalyzes the cyclization activity that produces IGP and AICAR from PRFAR using the ammonia provided by the HisH subunit. This is Imidazole glycerol phosphate synthase subunit HisF from Yersinia pestis (strain Pestoides F).